We begin with the raw amino-acid sequence, 672 residues long: PHD finger protein MALE STERILITY 1 (672 aa).

A PHD-type zinc finger spans residues arginine 614–histidine 664.

In closed flower buds, especially in anthers.

Its subcellular location is the nucleus. In terms of biological role, transcriptional activator required for anther and post-meiotic pollen development and maturation. Seems to regulate inflorescence branching and floral development. May control tapetal development by directly regulating tapetal programmed cell death (PCD) and breakdown. Implicated in pollen cytosolic components and wall development (e.g. exine and intine formation). This is PHD finger protein MALE STERILITY 1 (MS1) from Arabidopsis thaliana (Mouse-ear cress).